Consider the following 66-residue polypeptide: MKAADVRAMTTDQLDDELANLKKEQFNLRFQKATGQLEKTARVKQIRRDIARIKTIAAEKSAGKKA.

Belongs to the universal ribosomal protein uL29 family.

In Chelativorans sp. (strain BNC1), this protein is Large ribosomal subunit protein uL29.